Consider the following 464-residue polypeptide: MELFSLSSLLLLSTLFVFYIFKFVFKRRNQRNCYMLHYECYKGMEERKLDTETCAKVVQRNKNLGLEEYRFLLRTMASSGIGEETYGPRNVLEGREDSPTLLDAHSEMDEIMFDTLDKLFHKTKGSISPSDIDILVVNVSLFAPSPSLTSRVINRYKMREDIKSYNLSGLGCSASVISIDIVQRMFETRENALALVVSTETMGPHWYCGKDRSMMLSNCLFRAGGSSVLLTNAARFKNQALMKLVTVVRAHVGSDDEAYSCCIQMEDRDGHPGFLLTKYLKKAAARALTKNLQVLLPRVLPVKELIRYAIVRALKRRTSAKREPASSGIGLNLKTGLQHFCIHPGGRAIIEGVGKSLGLTEFDIEPARMALHRFGNTSSGGLWYVLGYMEAKNRLKKGEKILMMSMGAGFESNNCVWEVLKDLDDKNVWEDSVDRYPELSRIPNPFVEKYDWINDDTMSFVRVD.

The chain crosses the membrane as a helical span at residues 3–25 (LFSLSSLLLLSTLFVFYIFKFVF). The 295-residue stretch at 24–318 (VFKRRNQRNC…AIVRALKRRT (295 aa)) folds into the FAE domain. Residues C172, H251, H339, H343, H372, and N376 contribute to the active site.

The protein belongs to the thiolase-like superfamily. Chalcone/stilbene synthases family. Expressed in siliques.

The protein localises to the membrane. The enzyme catalyses a very-long-chain acyl-CoA + malonyl-CoA + H(+) = a very-long-chain 3-oxoacyl-CoA + CO2 + CoA. The protein operates within lipid metabolism; fatty acid biosynthesis. The protein is 3-ketoacyl-CoA synthase 19 of Arabidopsis thaliana (Mouse-ear cress).